The chain runs to 693 residues: MASTTLSDLPDVILSTISSLVSDSRARNSLSLVSHKFLALERSTRSHLTIRGNARDLSLVPDCFRSISHLDLSFLSPWGHTLLASLPIDHQNLLALRLKFCFPFVESLNVYTRSPSSLELLLPQWPRIRHIKLLRWHQRASQIPTGGDFVPIFEHCGGFLESLDLSNFYHWTEDLPPVLLRYADVAARLTRLDLLTASFTEGYKSSEIVSITKSCPNLKTFRVACTFDPRYFEFVGDETLSAVATSSPKLTLLHMVDTASLANPRAIPGTEAGDSAVTAGTLIEVFSGLPNLEELVLDVGKDVKHSGVALEALNSKCKKLRVLKLGQFQGVCSATEWRRLDGVALCGGLQSLSIKNSGDLTDMGLVAIGRGCCKLTTFEIQGCENVTVDGLRTMVSLRSKTLTDVRISCCKNLDTAASLKAIEPICDRIKRLHIDCVWSGSEDEEVEGRVETSEADHEEEDDGYERSQKRCKYSFEEEHCSTSDVNGFCSEDRVWEKLEYLSLWINVGEFLTPLPMTGLDDCPNLEEIRIKIEGDCRGKRRPAEPEFGLSCLALYPKLSKMQLDCGDTIGFALTAPPMQMDLSLWERFFLTGIGSLSLSELDYWPPQDRDVNQRSLSLPGAGLLQECLTLRKLFIHGTAHEHFMNFLLRIPNLRDVQLRADYYPAPENDMSTEMRVGSCSRFEDQLNSRNIID.

Residues 3 to 50 (STTLSDLPDVILSTISSLVSDSRARNSLSLVSHKFLALERSTRSHLTI) form the F-box domain. LRR repeat units follow at residues 9–34 (LPDV…SLVS), 49–74 (TIRG…DLSF), 75–100 (LSPW…RLKF), 110–135 (VYTR…KLLR), 141–167 (SQIP…DLSN), 168–196 (FYHW…DLLT), 200–225 (TEGY…RVAC), 232–257 (FEFV…HMVD), 274–299 (DSAV…VLDV), 302–327 (DVKH…KLGQ), 332–356 (CSAT…SIKN), 357–382 (SGDL…EIQG), 383–409 (CENV…RISC), and 410–436 (CKNL…HIDC). The tract at residues 445 to 465 (EVEGRVETSEADHEEEDDGYE) is disordered. 4 LRR repeats span residues 480–505 (CSTS…SLWI), 508–532 (GEFL…RIKI), 541–565 (RPAE…QLDC), and 608–637 (DRDV…FIHG).

Part of a SCF (SKP1-cullin-F-box) protein ligase complex. Interacts with SKP1A/ASK1. Interacts with CUL1. Interacts with SMXL6, SMXL7 and SMXL8. Interacts with D14. Forms a complex with D14 and SKP1A/ASK1 in presence of strigolactone. As to expression, expressed in the vasculature of growing leaves and roots, rosette axillary bud, flowers, siliques, funiculi and stems.

Its subcellular location is the nucleus. It functions in the pathway protein modification; protein ubiquitination. In terms of biological role, component of SCF(ASK-cullin-F-box) E3 ubiquitin ligase complexes, which may mediate the ubiquitination and subsequent proteasomal degradation of target proteins. Promotes the senescence. Is necessary for responses to strigolactones and karrikins. Contributes to the selective repression of axillary shoots and moderates the branching by regulating negatively the auxin transport in primary stems, in an AXR1-independent manner. Required for the progression of leaf senescence mediated by methyl jasmonate. Required at each node to suppress axillary bud growth. This Arabidopsis thaliana (Mouse-ear cress) protein is F-box protein MAX2.